Reading from the N-terminus, the 165-residue chain is 6,7-dimethyl-8-ribityllumazine synthase (165 aa).

5-amino-6-(D-ribitylamino)uracil contacts are provided by residues Y30, 61–63 (ALE), and 90–92 (VVI). 95–96 (ET) is a binding site for (2S)-2-hydroxy-3-oxobutyl phosphate. The active-site Proton donor is H98. N123 serves as a coordination point for 5-amino-6-(D-ribitylamino)uracil. R137 contacts (2S)-2-hydroxy-3-oxobutyl phosphate.

It belongs to the DMRL synthase family.

It carries out the reaction (2S)-2-hydroxy-3-oxobutyl phosphate + 5-amino-6-(D-ribitylamino)uracil = 6,7-dimethyl-8-(1-D-ribityl)lumazine + phosphate + 2 H2O + H(+). It functions in the pathway cofactor biosynthesis; riboflavin biosynthesis; riboflavin from 2-hydroxy-3-oxobutyl phosphate and 5-amino-6-(D-ribitylamino)uracil: step 1/2. In terms of biological role, catalyzes the formation of 6,7-dimethyl-8-ribityllumazine by condensation of 5-amino-6-(D-ribitylamino)uracil with 3,4-dihydroxy-2-butanone 4-phosphate. This is the penultimate step in the biosynthesis of riboflavin. This chain is 6,7-dimethyl-8-ribityllumazine synthase, found in Xanthobacter autotrophicus (strain ATCC BAA-1158 / Py2).